The chain runs to 222 residues: Putative N-acetylmannosamine-6-phosphate 2-epimerase (222 aa).

This sequence belongs to the NanE family.

The enzyme catalyses an N-acyl-D-glucosamine 6-phosphate = an N-acyl-D-mannosamine 6-phosphate. It functions in the pathway amino-sugar metabolism; N-acetylneuraminate degradation; D-fructose 6-phosphate from N-acetylneuraminate: step 3/5. Functionally, converts N-acetylmannosamine-6-phosphate (ManNAc-6-P) to N-acetylglucosamine-6-phosphate (GlcNAc-6-P). This Staphylococcus aureus (strain bovine RF122 / ET3-1) protein is Putative N-acetylmannosamine-6-phosphate 2-epimerase.